Consider the following 394-residue polypeptide: Phosphopentomutase (394 aa).

Mn(2+) contacts are provided by D13, D286, H291, D327, H328, and H339.

It belongs to the phosphopentomutase family. Requires Mn(2+) as cofactor.

It localises to the cytoplasm. It carries out the reaction 2-deoxy-alpha-D-ribose 1-phosphate = 2-deoxy-D-ribose 5-phosphate. The catalysed reaction is alpha-D-ribose 1-phosphate = D-ribose 5-phosphate. The protein operates within carbohydrate degradation; 2-deoxy-D-ribose 1-phosphate degradation; D-glyceraldehyde 3-phosphate and acetaldehyde from 2-deoxy-alpha-D-ribose 1-phosphate: step 1/2. Its function is as follows. Isomerase that catalyzes the conversion of deoxy-ribose 1-phosphate (dRib-1-P) and ribose 1-phosphate (Rib-1-P) to deoxy-ribose 5-phosphate (dRib-5-P) and ribose 5-phosphate (Rib-5-P), respectively. The chain is Phosphopentomutase from Bacillus cereus (strain B4264).